A 135-amino-acid chain; its full sequence is Hemoglobin subunit beta-3 (135 aa).

A Globin domain is found at 2 to 135 (HWTAEEKALV…VVDALSKAYQ (134 aa)). The heme b site is built by H57 and H81.

Belongs to the globin family. Hb 3 is a heterotetramer of two alpha and two beta-3 chains. As to expression, red blood cells (at protein level).

In terms of biological role, involved in oxygen transport from gills to the various peripheral tissues. This is Hemoglobin subunit beta-3 from Somniosus microcephalus (Greenland sleeper shark).